We begin with the raw amino-acid sequence, 444 residues long: UPF0761 membrane protein RC1_0578 (444 aa).

6 consecutive transmembrane segments (helical) span residues 49 to 69, 103 to 123, 145 to 165, 186 to 206, 219 to 239, and 248 to 268; these read LLAL…FPAY, AAAL…LLFF, LLSF…SLSV, FMLP…MIPN, IAAA…IAAF, and ALSV…VVLF. Residues 423-444 form a disordered region; the sequence is SGQPSGQVETAVRQRTGLQGRI.

Belongs to the UPF0761 family.

The protein localises to the cell inner membrane. This chain is UPF0761 membrane protein RC1_0578, found in Rhodospirillum centenum (strain ATCC 51521 / SW).